Reading from the N-terminus, the 997-residue chain is Translation initiation factor IF-2 (997 aa).

The disordered stretch occupies residues 36–415 (SMAGSLTTEE…ATQPLKAAKR (380 aa)). Basic and acidic residues-rich tracts occupy residues 45–65 (EAARVREHFAEQKQADAERSG) and 94–107 (AREEVAPPAEEKPA). A compositionally biased stretch (low complexity) spans 108-126 (AVEAPAQAEPVAEAPAASP). Basic and acidic residues predominate over residues 127–147 (HKVEEKAAPEAAKAEPAEKAK). Residues 151–162 (ARVVSAARVISR) are compositionally biased toward low complexity. Over residues 163-181 (PGEEEEKKPEPVVESKPEP) the composition is skewed to basic and acidic residues. Positions 182-196 (VAEISPVAAALAARE) are enriched in low complexity. Basic and acidic residues-rich tracts occupy residues 197 to 214 (AAARAEEKSSEKGEEKGA) and 241 to 252 (PEARTEAWKDAD). Residues 300–309 (GRPGAPGGPR) are compositionally biased toward gly residues. The segment covering 316–335 (PPRPGGPRPSGPGGPRPAGG) has biased composition (pro residues). The span at 378-388 (GGRRDDDDSQR) shows a compositional bias: basic and acidic residues. Residues 390–399 (NRGKGRRKGG) are compositionally biased toward basic residues. Positions 496 to 665 (PRPPVVTIMG…ALQSEIMELK (170 aa)) constitute a tr-type G domain. The G1 stretch occupies residues 505 to 512 (GHVDHGKT). 505 to 512 (GHVDHGKT) contacts GTP. The tract at residues 530 to 534 (GITQH) is G2. Residues 551–554 (DTPG) form a G3 region. Residues 551 to 555 (DTPGH) and 605 to 608 (NKMD) contribute to the GTP site. The G4 stretch occupies residues 605 to 608 (NKMD). The interval 641–643 (AAK) is G5.

This sequence belongs to the TRAFAC class translation factor GTPase superfamily. Classic translation factor GTPase family. IF-2 subfamily.

Its subcellular location is the cytoplasm. Its function is as follows. One of the essential components for the initiation of protein synthesis. Protects formylmethionyl-tRNA from spontaneous hydrolysis and promotes its binding to the 30S ribosomal subunits. Also involved in the hydrolysis of GTP during the formation of the 70S ribosomal complex. The polypeptide is Translation initiation factor IF-2 (Desulfovibrio desulfuricans (strain ATCC 27774 / DSM 6949 / MB)).